The chain runs to 227 residues: Translation initiation factor 6 (227 aa).

It belongs to the eIF-6 family.

Binds to the 50S ribosomal subunit and prevents its association with the 30S ribosomal subunit to form the 70S initiation complex. This is Translation initiation factor 6 from Methanococcus vannielii (strain ATCC 35089 / DSM 1224 / JCM 13029 / OCM 148 / SB).